The sequence spans 285 residues: Glutamate racemase (285 aa).

Substrate is bound by residues 28–29 (DS) and 60–61 (YG). The Proton donor/acceptor role is filled by C92. Residue 93–94 (NT) participates in substrate binding. The active-site Proton donor/acceptor is C204. Residue 205–206 (TH) coordinates substrate.

It belongs to the aspartate/glutamate racemases family.

It catalyses the reaction L-glutamate = D-glutamate. It participates in cell wall biogenesis; peptidoglycan biosynthesis. In terms of biological role, provides the (R)-glutamate required for cell wall biosynthesis. The sequence is that of Glutamate racemase from Escherichia coli O9:H4 (strain HS).